The sequence spans 201 residues: Small ribosomal subunit protein uS4c (201 aa).

A disordered region spans residues 20–44 (GLTSKRPKAGSDLRNQSRSGKKSQY). One can recognise an S4 RNA-binding domain in the interval 89–152 (MRLDNILFRL…NSRTLVQNLL (64 aa)).

This sequence belongs to the universal ribosomal protein uS4 family. Part of the 30S ribosomal subunit. Contacts protein S5. The interaction surface between S4 and S5 is involved in control of translational fidelity.

It localises to the plastid. It is found in the chloroplast. One of the primary rRNA binding proteins, it binds directly to 16S rRNA where it nucleates assembly of the body of the 30S subunit. Its function is as follows. With S5 and S12 plays an important role in translational accuracy. This chain is Small ribosomal subunit protein uS4c (rps4), found in Barbarea verna (Land cress).